Consider the following 562-residue polypeptide: Formate--tetrahydrofolate ligase (562 aa).

Residue 70–77 (TPAGEGKS) coordinates ATP.

Belongs to the formate--tetrahydrofolate ligase family.

It catalyses the reaction (6S)-5,6,7,8-tetrahydrofolate + formate + ATP = (6R)-10-formyltetrahydrofolate + ADP + phosphate. Its pathway is one-carbon metabolism; tetrahydrofolate interconversion. In Paenarthrobacter aurescens (strain TC1), this protein is Formate--tetrahydrofolate ligase.